We begin with the raw amino-acid sequence, 261 residues long: MLLAIDVGNTNAKFALFRGAELLARWRIATDDRRTADEYMVWLDQLMRIEGYDRGDVDAVIISTVVPRALHNLQLLAHKYFGVDALVAGREPVTWGIALKVDEPQSVGADRAVNAIAAQAVEPGRDKLVISFGTATTLDHIGPDGAYLGGIIAPGVNLSLEALVAAAAKLPRIAIEAPASASVIGRTTESQMLIGVYWGYVAMIEGLIARMKAQIGKPLVVVATGGLATLFQEQAHLFDRIEPDLTLNGLMHLYNQGQQKI.

6 to 13 (DVGNTNAK) is an ATP binding site. 108 to 111 (GADR) is a substrate binding site. D110 (proton acceptor) is an active-site residue. ATP is bound at residue T134. T188 serves as a coordination point for substrate.

The protein belongs to the type III pantothenate kinase family. In terms of assembly, homodimer. NH4(+) serves as cofactor. K(+) is required as a cofactor.

It localises to the cytoplasm. It carries out the reaction (R)-pantothenate + ATP = (R)-4'-phosphopantothenate + ADP + H(+). It functions in the pathway cofactor biosynthesis; coenzyme A biosynthesis; CoA from (R)-pantothenate: step 1/5. Functionally, catalyzes the phosphorylation of pantothenate (Pan), the first step in CoA biosynthesis. The sequence is that of Type III pantothenate kinase from Sphingopyxis alaskensis (strain DSM 13593 / LMG 18877 / RB2256) (Sphingomonas alaskensis).